Reading from the N-terminus, the 236-residue chain is Rab-like protein 3 (236 aa).

A small GTPase-like region spans residues 1–235 (MASLDRVKVL…GGGALKNFHC (235 aa)). GTP-binding positions include 16–21 (GVGKSS), 148–150 (KLD), and 179–180 (DC).

This sequence belongs to the small GTPase superfamily. Rab family. In terms of assembly, homodimer. Interacts with GPR89; the interaction stabilizes GPR89. Interacts with RAP1GDS1.

Functionally, required for KRAS signaling regulation and modulation of cell proliferation. Regulator of KRAS prenylation, and probably prenylation of other small GTPases. Required for lymphocyte development and function. Not required for myeloid cell development. This is Rab-like protein 3 (Rabl3) from Mus musculus (Mouse).